A 375-amino-acid chain; its full sequence is tRNA(Met) cytidine acetate ligase (375 aa).

Residues 7–20 (VVEY…HRYH), G101, N151, and R176 contribute to the ATP site.

The protein belongs to the TmcAL family.

The protein resides in the cytoplasm. It catalyses the reaction cytidine(34) in elongator tRNA(Met) + acetate + ATP = N(4)-acetylcytidine(34) in elongator tRNA(Met) + AMP + diphosphate. Its function is as follows. Catalyzes the formation of N(4)-acetylcytidine (ac(4)C) at the wobble position of elongator tRNA(Met), using acetate and ATP as substrates. First activates an acetate ion to form acetyladenylate (Ac-AMP) and then transfers the acetyl group to tRNA to form ac(4)C34. The sequence is that of tRNA(Met) cytidine acetate ligase from Limosilactobacillus fermentum (strain NBRC 3956 / LMG 18251) (Lactobacillus fermentum).